A 115-amino-acid chain; its full sequence is Large ribosomal subunit protein bL20 (115 aa).

The protein belongs to the bacterial ribosomal protein bL20 family.

Binds directly to 23S ribosomal RNA and is necessary for the in vitro assembly process of the 50S ribosomal subunit. It is not involved in the protein synthesizing functions of that subunit. The chain is Large ribosomal subunit protein bL20 from Chlorobium luteolum (strain DSM 273 / BCRC 81028 / 2530) (Pelodictyon luteolum).